A 517-amino-acid polypeptide reads, in one-letter code: MESLYETLRTLPLSVSIPLTTSIIIILSIVTNVVKQLWFPNPHRPPVVFHIFPFIGSTVQYGIDPYAFFFDCRDKYGDCFTFILLGKSTTVFLGPKGNDFILNGKHADLNAEDVYGKLTTPVFGEEVVYDCSNARFMDQKRLLKLGLTTDSLRCYIPKFVKEVEDYVKNSPYFKGDTGIVNITEVMAEITIYTASGSLLGNEVRSMFDSTFATLYRHLDDGFQPINFVMPGLPLPQNFRRNHARKVMEKLFSDIISKRRETGNQGDETDMIWMLMNAQYKDGEPLPDHHAARMLIAILMGGQHNTAVSGAWLLLNLAHKPHLVQELYEEQTQVLGSPQEPLTWENLQKLTLNGQVIKETLRLHSPIHSILRQVKSPMRVPGTEWVVPPSHTLLSSPGTMARSEEFFPRPSEWDPHRWDKIEPLVKTAEDGQTVDYGFGVMSKSVSSPYLPFGAGRHRCVGENYAYAQLGAIVATFIRLVHIEQPDPKAPLPAPDYSSMFSRPMNPAEIRWRRRETVE.

The helical transmembrane segment at 10–30 (TLPLSVSIPLTTSIIIILSIV) threads the bilayer. A lanosterol-binding site is contributed by Tyr-115. Gly-300 is a binding site for itraconazole. A heme-binding site is contributed by Cys-458.

Belongs to the cytochrome P450 family. Requires heme as cofactor.

It is found in the endoplasmic reticulum membrane. Its pathway is steroid metabolism; ergosterol biosynthesis. Functionally, together with cyp51A and cyp51B, encodes the sterol 14alpha-demethylase that plays a critical role in the third module of ergosterol biosynthesis pathway, being ergosterol the major sterol component in fungal membranes that participates in a variety of functions. Cyp51C does not seem to encode an active sterol 14-alpha-demethylase, but can impact indirectly on sterol 14alpha-demethylation, and is required for full virulence on host wheat ears, but not on Arabidopsis floral tissue or the fruits of apple and tomato. The third module or late pathway involves the ergosterol synthesis itself through consecutive reactions that mainly occur in the endoplasmic reticulum (ER) membrane. In filamentous fungi, during the initial step of this module, lanosterol (lanosta-8,24-dien-3beta-ol) can be metabolized to eburicol. Sterol 14alpha-demethylase catalyzes the three-step oxidative removal of the 14alpha-methyl group (C-32) of both these sterols in the form of formate, and converts eburicol and lanosterol to 14-demethyleburicol (4,4,24-trimethylergosta-8,14,24(28)-trienol) and 4,4-dimethyl-5alpha-cholesta-8,14,24-trien-3beta-ol, respectively, which are further metabolized by other enzymes in the pathway to ergosterol. This chain is Sterol 14-alpha demethylase CYP51C, found in Gibberella zeae (strain ATCC MYA-4620 / CBS 123657 / FGSC 9075 / NRRL 31084 / PH-1) (Wheat head blight fungus).